Here is a 114-residue protein sequence, read N- to C-terminus: UPF0145 protein PYRAB04900 (114 aa).

The protein belongs to the UPF0145 family.

The polypeptide is UPF0145 protein PYRAB04900 (Pyrococcus abyssi (strain GE5 / Orsay)).